The sequence spans 186 residues: piRNA-mediated silencing protein C19orf84 (186 aa).

Disordered regions lie at residues 1–42 and 89–186; these read MEQP…NSTD and SQAG…ETEY. Residues 13 to 22 are compositionally biased toward polar residues; the sequence is NNLSLPSSGT. Pro residues predominate over residues 24–36; it reads PWPPAPLPAPPPL. Basic residues predominate over residues 114–126; the sequence is RPGWGRGLHRRGL. The span at 145-157 shows a compositional bias: pro residues; sequence RTPPMTLPSPPTL.

In terms of assembly, interacts with SPOCD1.

It is found in the nucleus. It localises to the nucleoplasm. Its function is as follows. Protein adapter involved in piRNA-directed transposon methylation by connecting PIWIL4-piRNA and DNA methylation machineries. The PIWIL4-piRNA pathway plays a central role during spermatogenesis by directing transposon DNA methylation and silencing, thereby preventing their mobilization, which is essential for the germline integrity. In Homo sapiens (Human), this protein is piRNA-mediated silencing protein C19orf84.